A 381-amino-acid polypeptide reads, in one-letter code: Pectin lyase 1 (381 aa).

The first 20 residues, 1 to 20 (MKYASFIAAAAAALASAVSA), serve as a signal peptide directing secretion. Cystine bridges form between cysteine 83–cysteine 102 and cysteine 92–cysteine 227. Residue asparagine 130 is glycosylated (N-linked (GlcNAc...) asparagine). Arginine 257 is a catalytic residue. A disulfide bond links cysteine 324 and cysteine 332.

This sequence belongs to the polysaccharide lyase 1 family.

Its subcellular location is the secreted. The catalysed reaction is Eliminative cleavage of (1-&gt;4)-alpha-D-galacturonan methyl ester to give oligosaccharides with 4-deoxy-6-O-methyl-alpha-D-galact-4-enuronosyl groups at their non-reducing ends.. Functionally, pectinolytic enzymes consist of four classes of enzymes: pectin lyase, polygalacturonase, pectin methylesterase and rhamnogalacturonase. Among pectinolytic enzymes, pectin lyase is the most important in depolymerization of pectin, since it cleaves internal glycosidic bonds of highly methylated pectins. This chain is Pectin lyase 1 (pel1), found in Aspergillus oryzae (strain ATCC 42149 / RIB 40) (Yellow koji mold).